A 596-amino-acid polypeptide reads, in one-letter code: DNA polymerase kappa (596 aa).

In terms of domain architecture, UmuC spans C85–G320. Mg(2+) contacts are provided by D89 and D180. E181 is an active-site residue. The UBZ4-type zinc finger occupies T516 to Q545. Zn(2+) is bound by residues C519, C522, H536, and C540. Positions N559–K584 are disordered. Residues T570 to K584 show a composition bias toward basic residues.

This sequence belongs to the DNA polymerase type-Y family. The cofactor is Mg(2+). It depends on Mn(2+) as a cofactor.

It localises to the nucleus. It carries out the reaction DNA(n) + a 2'-deoxyribonucleoside 5'-triphosphate = DNA(n+1) + diphosphate. Its function is as follows. DNA polymerase specifically involved in DNA repair. Plays an important role in translesion synthesis, where the normal high-fidelity DNA polymerases cannot proceed and DNA synthesis stalls. Depending on the context, it inserts the correct base, but causes frequent base transitions, transversions and frameshifts. Lacks 3'-5' proofreading exonuclease activity. Forms a Schiff base with 5'-deoxyribose phosphate at abasic sites, but does not have lyase activity. The sequence is that of DNA polymerase kappa (polk-1) from Caenorhabditis elegans.